Reading from the N-terminus, the 291-residue chain is Hydroxysteroid 11-beta-dehydrogenase 1-like protein A (291 aa).

The N-terminal stretch at 1-18 (MAGVKLLLLSLCVGYTAY) is a signal peptide. Residues 40–66 (GSSTGIGEQIAYEFARMGAHIMVTARR), 91–92 (DM), and 118–120 (NHI) each bind NADP(+). S170 lines the substrate pocket. Y183 acts as the Proton acceptor in catalysis. NADP(+) contacts are provided by residues 183–187 (YCASK) and 216–222 (GYIDTEN).

The protein belongs to the short-chain dehydrogenases/reductases (SDR) family.

The protein localises to the secreted. The enzyme catalyses cortisone + NADPH + H(+) = cortisol + NADP(+). In terms of biological role, unidirectional NADP(+)-dependent cortisol dehydrogenase (in vitro). This chain is Hydroxysteroid 11-beta-dehydrogenase 1-like protein A (hsd11b1l-a), found in Xenopus laevis (African clawed frog).